Here is a 363-residue protein sequence, read N- to C-terminus: Carbamoyl phosphate synthase small chain (363 aa).

Residues 1 to 171 are CPSase; that stretch reads MEDGTLFAGA…PYRIPGPGPR (171 aa). Residues Ser39, Gly219, and Gly221 each contribute to the L-glutamine site. Residues 171–359 form the Glutamine amidotransferase type-1 domain; the sequence is RVVAVDFGAK…LALVDRSAVS (189 aa). Residue Cys248 is the Nucleophile of the active site. Leu249, Gln252, Asn290, Gly292, and Tyr293 together coordinate L-glutamine. Catalysis depends on residues His332 and Glu334.

Belongs to the CarA family. In terms of assembly, composed of two chains; the small (or glutamine) chain promotes the hydrolysis of glutamine to ammonia, which is used by the large (or ammonia) chain to synthesize carbamoyl phosphate. Tetramer of heterodimers (alpha,beta)4.

It catalyses the reaction hydrogencarbonate + L-glutamine + 2 ATP + H2O = carbamoyl phosphate + L-glutamate + 2 ADP + phosphate + 2 H(+). The catalysed reaction is L-glutamine + H2O = L-glutamate + NH4(+). It participates in amino-acid biosynthesis; L-arginine biosynthesis; carbamoyl phosphate from bicarbonate: step 1/1. Its pathway is pyrimidine metabolism; UMP biosynthesis via de novo pathway; (S)-dihydroorotate from bicarbonate: step 1/3. Its function is as follows. Small subunit of the glutamine-dependent carbamoyl phosphate synthetase (CPSase). CPSase catalyzes the formation of carbamoyl phosphate from the ammonia moiety of glutamine, carbonate, and phosphate donated by ATP, constituting the first step of 2 biosynthetic pathways, one leading to arginine and/or urea and the other to pyrimidine nucleotides. The small subunit (glutamine amidotransferase) binds and cleaves glutamine to supply the large subunit with the substrate ammonia. This chain is Carbamoyl phosphate synthase small chain, found in Symbiobacterium thermophilum (strain DSM 24528 / JCM 14929 / IAM 14863 / T).